We begin with the raw amino-acid sequence, 488 residues long: Sucrose phosphorylase (488 aa).

Sucrose is bound by residues Asp-50, His-88, 191–193 (RLD), Glu-233, 290–291 (HD), 341–344 (DLYQ), and Arg-398. The active-site Nucleophile is the Asp-193. Glu-233 functions as the Proton donor in the catalytic mechanism.

The protein belongs to the glycosyl hydrolase 13 family. Sucrose phosphorylase subfamily.

It catalyses the reaction sucrose + phosphate = D-fructose + alpha-D-glucose 1-phosphate. In Agrobacterium vitis (Rhizobium vitis), this protein is Sucrose phosphorylase.